The primary structure comprises 290 residues: MADSKLLAPELSDAESMGEETVRFQELLLKASKELQQAQTARPESTQIQPKPGFCIKTNSSEGKVFINICHSPSIPPPVDVTEDELLQMLEEDQAGFRIPMSLGEPHAELDAKGQGCTAYDVAVNSNFYLRMQNSDFLRELVVTIAREGLEDKYGLQLNPEWRMLKYRSFLGSISQQSIRSQQRPRIQELGTLDTHDSLGTRHGPERPHLNLWLEAPDLLLAEVDLPKLDGAQGLALEIGENRLVVGGPQQLYHLDACIPLRINSEASRAAFHHRRKQLMVSMPLLSASS.

Phosphoserine is present on residues Ser-12, Ser-16, and Ser-173.

The protein belongs to the PIH1 family. In terms of assembly, component of the R2TP complex composed at least of RUVBL1, RUVBL2, RPAP3 and PIHD1. Component of the PAQosome complex which is responsible for the biogenesis of several protein complexes and which consists of R2TP complex members RUVBL1, RUVBL2, RPAP3 and PIH1D1, URI complex members PFDN2, PFDN6, PDRG1, UXT and URI1 as well as ASDURF, POLR2E and DNAAF10/WDR92. Interacts with phosphorylated TELO2 and mediates interaction of TELO2 with the R2TP complex. Interacts with phosphorylated ECD, EFTUD2/SNRP116, RPB1 and UBR5 and with RPB1 in a phosphorylation-independent manner. Interacts with the core C/D box snoRNP particle components NOP58 and FBL and with RUVBL1/TIP49. Interacts with RPAP3 and DNAAF10. Interacts with histone H4 and with SWI/SNF complex member SMARCB1/SNF5. Interacts with the mTORC1 complex member RPTOR. Interacts with MSL1.

The protein resides in the nucleus. Its function is as follows. Involved in the assembly of C/D box small nucleolar ribonucleoprotein (snoRNP) particles. Recruits the SWI/SNF complex to the core promoter of rRNA genes and enhances pre-rRNA transcription. Mediates interaction of TELO2 with the R2TP complex which is necessary for the stability of MTOR and SMG1. Positively regulates the assembly and activity of the mTORC1 complex. This is PIH1 domain-containing protein 1 (Pih1d1) from Rattus norvegicus (Rat).